A 2588-amino-acid polypeptide reads, in one-letter code: uncharacterized protein (2588 aa).

The segment covering 1–11 (MSFKNNEKYMD) has biased composition (basic and acidic residues). 9 disordered regions span residues 1-56 (MSFK…NISN), 442-598 (ELES…HFSN), 774-801 (KKEKKKTKTDMDNNNNNNNNNNNDNNNI), 1303-1357 (DSHD…KKKY), 1631-1662 (QNSNNKSNDSLKMSYSKKKKQHTNEHMNHHQN), 1685-1705 (NNNNNNNNNNNNNDDNTKDQP), 1820-1856 (KLNVQTNDQGERQDERNIDHEDEPVSSNTEDDHEEND), 2317-2342 (KKKKELDDVEKEGQPKMGVGNDDNIN), and 2415-2437 (YDNNNNNDNNNDNNNDNNNNSHT). A compositionally biased stretch (low complexity) spans 42–56 (NNNNNNNNNNSNISN). Residues 413–452 (YREIEENEKVMEMQRRENELLEEKKRLKQELESYHDDSST) are a coiled coil. Residues 451 to 462 (STDDDSSADEQQ) are compositionally biased toward acidic residues. 2 stretches are compositionally biased toward basic and acidic residues: residues 463–515 (DERR…KNDD) and 522–588 (DHTH…DHTH). Low complexity predominate over residues 785–801 (DNNNNNNNNNNNDNNNI). The segment covering 1308 to 1318 (NNDDSVNDSND) has biased composition (acidic residues). A compositionally biased stretch (low complexity) spans 1319 to 1331 (DTNNVNVNVNVND). Positions 1347-1356 (DKKKKHKKKK) are enriched in basic residues. The span at 1631–1643 (QNSNNKSNDSLKM) shows a compositional bias: polar residues. The span at 1685–1698 (NNNNNNNNNNNNND) shows a compositional bias: low complexity. Over residues 1828-1838 (QGERQDERNID) the composition is skewed to basic and acidic residues. The segment covering 1839 to 1856 (HEDEPVSSNTEDDHEEND) has biased composition (acidic residues). The span at 2416–2434 (DNNNNNDNNNDNNNDNNNN) shows a compositional bias: low complexity.

This is an uncharacterized protein from Plasmodium falciparum (isolate 3D7).